The chain runs to 158 residues: MDNKLTHFDNKGNAVMVDVSNKNETERIAIATGTVKASSETIELIKSGQIGKGDVLGVARVAGIMAMKNTSNLIPMCHPVMITGSSIDFEIDSEKNEIRITATSKVVHKTGVEMEALTGVSIAALTIYDMCKAVDKRMVIGDIHLVKKLGGKSGEFNF.

Residues 76–78 and 114–115 each bind substrate; these read MCH and ME. The active site involves Asp129.

It belongs to the MoaC family. As to quaternary structure, homohexamer; trimer of dimers.

The enzyme catalyses (8S)-3',8-cyclo-7,8-dihydroguanosine 5'-triphosphate = cyclic pyranopterin phosphate + diphosphate. It participates in cofactor biosynthesis; molybdopterin biosynthesis. In terms of biological role, catalyzes the conversion of (8S)-3',8-cyclo-7,8-dihydroguanosine 5'-triphosphate to cyclic pyranopterin monophosphate (cPMP). The sequence is that of Cyclic pyranopterin monophosphate synthase from Clostridium perfringens (strain 13 / Type A).